Here is a 671-residue protein sequence, read N- to C-terminus: DNA ligase (671 aa).

NAD(+) contacts are provided by residues 32 to 36 (DVEYD), 81 to 82 (SL), and Glu114. Catalysis depends on Lys116, which acts as the N6-AMP-lysine intermediate. Residues Arg137, Glu175, Lys292, and Lys316 each contribute to the NAD(+) site. Residues Cys410, Cys413, Cys428, and Cys434 each contribute to the Zn(2+) site. Residues 592-671 (EKNNYFSGKN…AEFYQILGIR (80 aa)) form the BRCT domain.

Belongs to the NAD-dependent DNA ligase family. LigA subfamily. The cofactor is Mg(2+). Requires Mn(2+) as cofactor.

It carries out the reaction NAD(+) + (deoxyribonucleotide)n-3'-hydroxyl + 5'-phospho-(deoxyribonucleotide)m = (deoxyribonucleotide)n+m + AMP + beta-nicotinamide D-nucleotide.. Functionally, DNA ligase that catalyzes the formation of phosphodiester linkages between 5'-phosphoryl and 3'-hydroxyl groups in double-stranded DNA using NAD as a coenzyme and as the energy source for the reaction. It is essential for DNA replication and repair of damaged DNA. This chain is DNA ligase, found in Baumannia cicadellinicola subsp. Homalodisca coagulata.